The primary structure comprises 1072 residues: Rho family-interacting cell polarization regulator 2 (1072 aa).

A coiled-coil region spans residues 83–112 (NGLDEYLEVHQTELDKLTAQLKDMRRNSRL). The segment at 173–470 (RESLTEINRS…ATTATQHRAR (298 aa)) is necessary for interaction with NCAM and myoblast protrusion formation. Disordered stretches follow at residues 439–465 (DRVP…TTAT) and 683–718 (EVEK…AGSP). A compositionally biased stretch (polar residues) spans 447-460 (AEPSSAHVTSSPDI). Basic and acidic residues predominate over residues 683–698 (EVEKNSYRTEHPEARG).

It belongs to the RIPOR family. In terms of assembly, homooligomer; homooligomerization is regulated by RHOC and leads to the formation of concatemers through the association of N- and C-termini. Interacts with NCAM; this interaction is necessary for myoblast protrusion formation. As to expression, expressed in myoblast and myotubes (at protein level). Expressed in brain, eyes and skeletal muscle.

Its subcellular location is the cytoplasm. It localises to the cytoskeleton. It is found in the cell projection. The protein localises to the filopodium. The protein resides in the apical cell membrane. Its subcellular location is the stereocilium. It localises to the stereocilium membrane. Functionally, acts as an inhibitor of the small GTPase RHOA and plays several roles in the regulation of myoblast and hair cell differentiation, lymphocyte T proliferation and neutrophil polarization. Plays a role in fetal mononuclear myoblast differentiation by promoting filopodia and myotube formation. Maintains naive T lymphocytes in a quiescent state and prevents chemokine-induced T lymphocyte responses, such as cell adhesion, polarization and migration. Involved also in the regulation of neutrophil polarization, chemotaxis and adhesion. Required for normal development of inner and outer hair cell stereocilia within the cochlea of the inner ear. Plays a role for maintaining the structural organization of the basal domain of stereocilia. Involved in mechanosensory hair cell function. Required for normal hearing. The protein is Rho family-interacting cell polarization regulator 2 of Coturnix japonica (Japanese quail).